The sequence spans 1008 residues: MEGWQEPPRIPLTQICRVSHTAPVATEIGQLTDTLPLTFDLAEDLVWAGDTNGIVSSYYGETLQPYSRFRAGRGRVTSLVSHDRGLVALTTDALHYSTRGGLTRKHVTDPSLGNNLCMTFTHGPTEFVVGGNPGKLVVVNSERGDVTRVVDSPGMATHMAGSSSCVVWGTENGKLVVGDNNLKELHTFQAHQGPFSDVSVQDNVVMTCGFSAASTGHRIDPLIKVWDLRMMRAMAPISYPLAAFVCQTPDSRTLITSPSGQLEFLDHATQQIKLYQAEVALVNGVKLSPRGHHFVVSDTSGQLQLWSDEPQSSFAEFSAPTAFPTPEQSYPPVSIRDTRYPLGAVGMPYYSDTLLSAMPSSIINVGMPPEEVDEDLEVRQIDFVGHAPNYKQQKRNLAQKYSNQRRTSIAAPKFLSEKEKERARRMEDIEDESFFGDEDTCTEASMSSKKVPRLYRKLEIKYSKFGISDFDFSYYNNHTGLSGLETNPFNPLLQLFRFCSPVFNFALRSVARGTPNRLLNEVGLLFDMMHKARGHVCRASNLMHCYDGIAQTRSLAPEDATNIVLFCRFLLEQIGFEQRQTPALFDSFRQLLGATVITVNTFSCGKMAQAESVWYTLELALGSTFYECLERTLDKELHTRAWCDKCRKYQSLHVSKHVESLPQVLTLSVADGNVDVAKSFLVLDGKVSPAAETDNDAYKLVGFICQIQGNGQVAFIRVGDEWYLFNDFLVTKVSEKEAFMKTPWKRTVMMVYAVGADERFDYDSWKNDMDVSALFEERLVNGNNVSRETTDYGYELIKEVPPPKTLCAIDAEFVVLKNEETEIRSDGTKVVLAPRNLCLARVTLLNEDGHPFINDYIAINEHIVDYLTAFSGIEPGDLDPSISRKPLVSLPTSYRRLWLLLNLGCVFVGHGLANDFRTINMQVPPEQVIDTVDLYYIPSERRKLSLRFLAWCVLGKKVQSGNHDSTEDSHTALLLYKKYQDCAPEEFQVLLLDVYRQGRMCNFKVPEA.

WD repeat units follow at residues 29-68, 110-149, 158-198, 200-236, and 277-316; these read GQLT…PYSR, PSLG…VTRV, HMAG…FSDV, VQDN…AMAP, and AEVA…SFAE. Residues 314 to 449 are linker; that stretch reads FAEFSAPTAF…TCTEASMSSK (136 aa). Residues 450-755 enclose the USP domain; that stretch reads KVPRLYRKLE…RTVMMVYAVG (306 aa). Residues 808–976 enclose the Exonuclease domain; that stretch reads AIDAEFVVLK…EDSHTALLLY (169 aa). A divalent metal cation-binding residues include D810, E812, D915, and D968.

It belongs to the peptidase C19 family. PAN2 subfamily. As to quaternary structure, forms a heterotrimer with an asymmetric homodimer of the regulatory subunit PAN3 to form the poly(A)-nuclease (PAN) deadenylation complex. A divalent metal cation serves as cofactor.

It localises to the cytoplasm. The enzyme catalyses Exonucleolytic cleavage of poly(A) to 5'-AMP.. Its activity is regulated as follows. Positively regulated by the regulatory subunit PAN3. Catalytic subunit of the poly(A)-nuclease (PAN) deadenylation complex, one of two cytoplasmic mRNA deadenylases involved in mRNA turnover. PAN specifically shortens poly(A) tails of RNA and the activity is stimulated by poly(A)-binding protein PAB1. PAN deadenylation is followed by rapid degradation of the shortened mRNA tails by the CCR4-NOT complex. Deadenylated mRNAs are then degraded by two alternative mechanisms, namely exosome-mediated 3'-5' exonucleolytic degradation, or deadenylation-dependent mRNA decaping and subsequent 5'-3' exonucleolytic degradation by XRN1. May also be involved in post-transcriptional maturation of mRNA poly(A) tails. In Yarrowia lipolytica (strain CLIB 122 / E 150) (Yeast), this protein is PAN2-PAN3 deadenylation complex catalytic subunit PAN2.